The sequence spans 1359 residues: NPC1-like intracellular cholesterol transporter 1 (1359 aa).

A signal peptide spans 1 to 21; the sequence is MAEAGLRGWLLWALLLRLAQS. Over 22 to 284 the chain is Extracellular; that stretch reads EPYTTIHQPG…TFYLGQMPGS (263 aa). 9 disulfide bridges follow: cysteine 33–cysteine 90, cysteine 39–cysteine 57, cysteine 78–cysteine 125, cysteine 91–cysteine 129, cysteine 113–cysteine 254, cysteine 116–cysteine 172, cysteine 189–cysteine 197, cysteine 243–cysteine 259, and cysteine 256–cysteine 263. Asparagine 54 carries N-linked (GlcNAc...) asparagine glycosylation. 2 N-linked (GlcNAc...) asparagine glycosylation sites follow: asparagine 132 and asparagine 138. An N-linked (GlcNAc...) asparagine glycan is attached at asparagine 244. The helical transmembrane segment at 285 to 305 threads the bilayer; that stretch reads LVLIIILCSVFAVVTILLVGF. Residues 306–351 are Cytoplasmic-facing; it reads RVAPARDKSKMVDPKKGTSLSDKLSFSTHTLLGQFFQGWGTWVASW. A helical transmembrane segment spans residues 352–372; the sequence is PLTILVLSVIPVVALAAGLVF. Residues 373-632 are Extracellular-facing; that stretch reads TELTTDPVEL…DEINRTTAED (260 aa). 6 N-linked (GlcNAc...) asparagine glycosylation sites follow: asparagine 416, asparagine 431, asparagine 464, asparagine 479, asparagine 497, and asparagine 506. Residues cysteine 471 and cysteine 485 are joined by a disulfide bond. Cysteine 525 and cysteine 542 are joined by a disulfide. A glycan (N-linked (GlcNAc...) asparagine) is linked at asparagine 626. The 166-residue stretch at 632 to 797 folds into the SSD domain; sequence DLPIFATSYI…MSAFVALLSL (166 aa). A helical transmembrane segment spans residues 633–653; the sequence is LPIFATSYIVIFLYISLALGS. The Cytoplasmic segment spans residues 654-666; the sequence is YSSWSRVMVDSKA. The helical transmembrane segment at 667 to 687 threads the bilayer; the sequence is TLGLGGVAVVLGAVMAAMGFF. Residues 688–696 are Extracellular-facing; the sequence is SYLGIRSSL. Residues 697 to 717 traverse the membrane as a helical segment; sequence VILQVVPFLVLSVGADNIFIF. Residues 718–742 lie on the Cytoplasmic side of the membrane; it reads VLEYQRLPRRPGEPREVHIGRALGR. Residues 743–763 traverse the membrane as a helical segment; the sequence is VAPSMLLCSLSEAICFFLGAL. Residues 764–776 lie on the Extracellular side of the membrane; that stretch reads TPMPAVRTFALTS. The chain crosses the membrane as a helical span at residues 777 to 797; the sequence is GLAVILDFLLQMSAFVALLSL. Residues 798–846 lie on the Cytoplasmic side of the membrane; that stretch reads DSKRQEASRLDVCCCVKPQELPPPGQGEGLLLGFFQKAYAPFLLHWITR. A helical transmembrane segment spans residues 847–867; that stretch reads GVVLLLFLALFGVSLYSMCHI. Residues 868–1139 are Extracellular-facing; it reads SVGLDQELAL…EQYLTILPEG (272 aa). Cystine bridges form between cysteine 920/cysteine 925, cysteine 966/cysteine 1024, and cysteine 980/cysteine 989. A helical transmembrane segment spans residues 1140–1160; that stretch reads LFMLSLCLVPTFAVSCLLLGL. The Cytoplasmic portion of the chain corresponds to 1161–1168; that stretch reads DLRSGLLN. A helical transmembrane segment spans residues 1169 to 1189; that stretch reads LLSIVMILVDTVGFMALWGIS. The Extracellular portion of the chain corresponds to 1190–1191; that stretch reads YN. The chain crosses the membrane as a helical span at residues 1192 to 1212; that stretch reads AVSLINLVSAVGMSVEFVSHI. At 1213–1236 the chain is on the cytoplasmic side; that stretch reads TRSFAISTKPTWLERAKEATISMG. The helical transmembrane segment at 1237–1257 threads the bilayer; the sequence is SAVFAGVAMTNLPGILVLGLA. At 1258–1268 the chain is on the extracellular side; the sequence is KAQLIQIFFFR. Residues 1269–1289 form a helical membrane-spanning segment; it reads LNLLITLLGLLHGLVFLPVIL. Topologically, residues 1290 to 1359 are cytoplasmic; it reads SYVGPDVNPA…NFLPNNGRQF (70 aa).

This sequence belongs to the patched family. Interacts with RAB11A, MYO5B and RAB11FIP2. Interaction with RAB11A, MYO5B and RAB11FIP2 is required for proper transport to the plasma membrane upon cholesterol depletion. Interacts with NPC2. Interacts with LIMA1. Post-translationally, highly glycosylated. In terms of tissue distribution, widely expressed. Expressed in liver. Also expressed in small intestine, pancreas, kidney, lung, pancreas, spleen, heart, gall bladder, brain, testis, stomach and muscle.

Its subcellular location is the apical cell membrane. The protein resides in the cell membrane. It is found in the cytoplasmic vesicle membrane. It catalyses the reaction cholesterol(in) = cholesterol(out). It carries out the reaction sitosterol(out) = sitosterol(in). Plays a major role in cholesterol homeostasis. Critical for the uptake of cholesterol across the plasma membrane of the intestinal enterocyte. Involved in plant sterol absorption, it transports sitosterol, although at lower rates than cholesterol. Is the direct molecular target of ezetimibe, a drug that inhibits cholesterol absorption and is approved for the treatment of hypercholesterolemia. May have a function in the transport of multiple lipids and their homeostasis, thereby influencing lipid metabolism regulation. May be involved in caveolin trafficking from the plasma membrane. In addition, acts as a negative regulator of NPC2 and down-regulates its expression and secretion by inhibiting its maturation and accelerating its degradation. This Homo sapiens (Human) protein is NPC1-like intracellular cholesterol transporter 1.